The sequence spans 372 residues: Oxidoreductase ptaL (372 aa).

The first 16 residues, 1–16 (MKHIVIIGGGFAGVST), serve as a signal peptide directing secretion. 6-hydroxy-FAD-binding positions include 8–12 (GGGFA) and R51. N251 carries N-linked (GlcNAc...) asparagine glycosylation. D285 serves as a coordination point for 6-hydroxy-FAD.

The protein belongs to the FAD-dependent oxidoreductase family. 6-hydroxy-FAD serves as cofactor.

The protein operates within secondary metabolite biosynthesis. Its function is as follows. Oxidoreductase; part of the gene cluster that mediates the biosynthesis of pestheic acid, a diphenyl ether which is a biosynthetic precursor of the unique chloropupukeananes. The biosynthesis initiates from condensation of acetate and malonate units catalyzed by the non-reducing PKS ptaA. As the ptaA protein is TE/CLC domain-deficient, hydrolysis and Claisen cyclization of the polyketide could be catalyzed by ptaB containing a beta-lactamase domain. The ptaB protein might hydrolyze the thioester bond between the ACP of ptaA and the intermediate to release atrochrysone carboxylic acid, which is spontaneously dehydrated to form endocrocin anthrone. Endocrocin anthrone is then converted to endocrocin, catalyzed by the anthrone oxygenase ptaC. Spontaneous decarboxylation of endocrocin occurs to generate emodin. An O-methyltransferase (ptaH or ptaI) could methylate emodin to form physcion. PtaJ could then catalyze the oxidative cleavage of physcion, and rotation of the intermediate could then afford desmethylisosulochrin. PtaF, a putative NADH-dependent oxidoreductase, might also participate in the oxidative cleavage step. Desmethylisosulochrin is then transformed by another O-methyltransferase (ptaH or ptaI) to form isosulochrin. Chlorination of isosulochrin by ptaM in the cyclohexadienone B ring then produces chloroisosulochrin. PtaE is responsible for the oxidative coupling reactions of both benzophenones isosulochrin and chloroisosulochrin to RES-1214-1 and pestheic acid respectively, regardless of chlorination. The protein is Oxidoreductase ptaL of Pestalotiopsis fici (strain W106-1 / CGMCC3.15140).